The following is a 250-amino-acid chain: Flavin-dependent thymidylate synthase (250 aa).

The region spanning 7-233 is the ThyX domain; that stretch reads LRVQLIAKTE…PAVFADFEVT (227 aa). DUMP contacts are provided by residues 92–95, 103–107, and R172; these read ELIR and QLSQR. Residues 95–97 and Q103 each bind FAD; that span reads RHR. Positions 95-105 match the ThyX motif motif; sequence RHRHFSYSQLS. FAD-binding positions include 188-190 and H194; that span reads NYR. Residue R199 coordinates dUMP. Catalysis depends on R199, which acts as the Involved in ionization of N3 of dUMP, leading to its activation.

It belongs to the thymidylate synthase ThyX family. As to quaternary structure, homotetramer. FAD is required as a cofactor.

The enzyme catalyses dUMP + (6R)-5,10-methylene-5,6,7,8-tetrahydrofolate + NADPH + H(+) = dTMP + (6S)-5,6,7,8-tetrahydrofolate + NADP(+). Its pathway is pyrimidine metabolism; dTTP biosynthesis. Functionally, catalyzes the reductive methylation of 2'-deoxyuridine-5'-monophosphate (dUMP) to 2'-deoxythymidine-5'-monophosphate (dTMP) while utilizing 5,10-methylenetetrahydrofolate (mTHF) as the methyl donor, and NADPH and FADH(2) as the reductant. This Mycobacterium marinum (strain ATCC BAA-535 / M) protein is Flavin-dependent thymidylate synthase.